Here is a 1250-residue protein sequence, read N- to C-terminus: DNA-directed RNA polymerase subunit beta (1250 aa).

The segment at 1215–1250 (QDLNDDDINPDDTIDAELDDNLFDDDFDDTFDDDDL) is disordered.

This sequence belongs to the RNA polymerase beta chain family. In terms of assembly, the RNAP catalytic core consists of 2 alpha, 1 beta, 1 beta' and 1 omega subunit. When a sigma factor is associated with the core the holoenzyme is formed, which can initiate transcription.

The catalysed reaction is RNA(n) + a ribonucleoside 5'-triphosphate = RNA(n+1) + diphosphate. Functionally, DNA-dependent RNA polymerase catalyzes the transcription of DNA into RNA using the four ribonucleoside triphosphates as substrates. This Acetivibrio thermocellus (strain ATCC 27405 / DSM 1237 / JCM 9322 / NBRC 103400 / NCIMB 10682 / NRRL B-4536 / VPI 7372) (Clostridium thermocellum) protein is DNA-directed RNA polymerase subunit beta.